The chain runs to 260 residues: Trans-aconitate 2-methyltransferase (260 aa).

The protein belongs to the methyltransferase superfamily. Tam family.

It localises to the cytoplasm. It carries out the reaction trans-aconitate + S-adenosyl-L-methionine = (E)-3-(methoxycarbonyl)pent-2-enedioate + S-adenosyl-L-homocysteine. Its function is as follows. Catalyzes the S-adenosylmethionine monomethyl esterification of trans-aconitate. This Paracidovorax citrulli (strain AAC00-1) (Acidovorax citrulli) protein is Trans-aconitate 2-methyltransferase.